A 290-amino-acid chain; its full sequence is Proteasome assembly chaperone 1 (290 aa).

Residues 1–39 form a disordered region; it reads MAATFFGEVVKAPCRAGTEDEEEEEEEEGRRETPEDREV. A2 is subject to N-acetylalanine. The residue at position 18 (T18) is a Phosphothreonine. Basic and acidic residues predominate over residues 28 to 39; the sequence is EGRRETPEDREV. A Phosphothreonine modification is found at T56. S182 is modified (phosphoserine). K266 is subject to N6-acetyllysine.

This sequence belongs to the PSMG1 family. In terms of assembly, forms a heterodimer with PSMG2. The PSMG1-PSMG2 heterodimer interacts directly with the PSMA5 and PSMA7 proteasome alpha subunits. Post-translationally, degraded by the proteasome upon completion of 20S proteasome maturation.

The protein localises to the cytoplasm. Its subcellular location is the endoplasmic reticulum. Its function is as follows. Chaperone protein which promotes assembly of the 20S proteasome as part of a heterodimer with PSMG2. The PSMG1-PSMG2 heterodimer binds to the PSMA5 and PSMA7 proteasome subunits, promotes assembly of the proteasome alpha subunits into the heteroheptameric alpha ring and prevents alpha ring dimerization. This is Proteasome assembly chaperone 1 (PSMG1) from Papio anubis (Olive baboon).